The primary structure comprises 99 residues: Large ribosomal subunit protein uL23 (99 aa).

It belongs to the universal ribosomal protein uL23 family. In terms of assembly, part of the 50S ribosomal subunit. Contacts protein L29, and trigger factor when it is bound to the ribosome.

Functionally, one of the early assembly proteins it binds 23S rRNA. One of the proteins that surrounds the polypeptide exit tunnel on the outside of the ribosome. Forms the main docking site for trigger factor binding to the ribosome. This chain is Large ribosomal subunit protein uL23, found in Xanthomonas axonopodis pv. citri (strain 306).